A 308-amino-acid polypeptide reads, in one-letter code: KH domain-containing protein At4g26480 (308 aa).

Positions 1–26 (MMMMTSLGGGAGGGGGGGGSGGGRFV) are disordered. Gly residues predominate over residues 7–24 (LGGGAGGGGGGGGSGGGR). The KH domain occupies 165 to 232 (DIPVDKYPNY…EHLNEPLHIL (68 aa)). A disordered region spans residues 284 to 308 (EEGSPMSGSISPYNSLGMKRAKTRG). The residue at position 294 (Ser-294) is a Phosphoserine.

Its subcellular location is the nucleus. This Arabidopsis thaliana (Mouse-ear cress) protein is KH domain-containing protein At4g26480.